The chain runs to 642 residues: Uromodulin (642 aa).

A signal peptide spans methionine 1–isoleucine 26. The region spanning arginine 32–glutamate 64 is the EGF-like 1 domain. 21 disulfide bridges follow: cysteine 34–cysteine 43, cysteine 37–cysteine 52, cysteine 54–cysteine 65, cysteine 71–cysteine 85, cysteine 79–cysteine 94, cysteine 96–cysteine 108, cysteine 114–cysteine 128, cysteine 122–cysteine 137, cysteine 139–cysteine 150, cysteine 152–cysteine 163, cysteine 157–cysteine 172, cysteine 176–cysteine 269, cysteine 197–cysteine 284, cysteine 219–cysteine 257, cysteine 225–cysteine 289, cysteine 250–cysteine 258, cysteine 299–cysteine 308, cysteine 302–cysteine 317, cysteine 319–cysteine 348, cysteine 336–cysteine 426, and cysteine 367–cysteine 390. Asparagine 40 is a glycosylation site (N-linked (GlcNAc...) asparagine). Residues aspartate 67–isoleucine 109 form the EGF-like 2; calcium-binding domain. The N-linked (GlcNAc...) asparagine glycan is linked to asparagine 78. One can recognise an EGF-like 3; calcium-binding domain in the interval aspartate 110–glutamate 151. Residue asparagine 134 is glycosylated (N-linked (GlcNAc...) asparagine). The beta hairpin stretch occupies residues cysteine 152 to alanine 173. A D10C region spans residues aspartate 174–threonine 293. Asparagine 234 and asparagine 246 each carry an N-linked (GlcNAc...) asparagine glycan. An N-linked (GlcNAc...) asparagine glycan is attached at asparagine 277. The EGF-like 4 domain maps to serine 294–valine 325. Asparagine 324 carries an N-linked (GlcNAc...) asparagine glycan. The ZP-N stretch occupies residues glutamate 335–leucine 430. The 256-residue stretch at glutamate 335–serine 590 folds into the ZP domain. Asparagine 397 and asparagine 448 each carry an N-linked (GlcNAc...) asparagine glycan. The segment at aspartate 431–threonine 454 is flexible ZP-N/ZP-C linker; important for secretion and polymerization into filaments. Residues glycine 455 to glutamine 465 are internal hydrophobic patch (IHP). Residues glycine 455–serine 590 are ZP-C. 3 disulfides stabilise this stretch: cysteine 507-cysteine 567, cysteine 528-cysteine 583, and cysteine 572-cysteine 579. N-linked (GlcNAc...) asparagine glycosylation is present at asparagine 514. Positions arginine 587–serine 590 are essential for cleavage by HPN. The tract at residues valine 599–arginine 607 is external hydrophobic patch (EHP); regulates polymerization into filaments. A lipid anchor (GPI-anchor amidated serine) is attached at serine 620. Positions serine 621–glutamine 642 are cleaved as a propeptide — removed in mature form.

Homodimer that then polymerizes into long filaments. The filaments can additionally assemble laterally to form a sheet. The filaments consist of a zigzag-shaped backbone with laterally protruding arms which interact with bacterial adhesin fimH. Two fimH molecules can bind to a single UMOD monomer. N-glycosylated. In terms of processing, proteolytically cleaved at a conserved C-terminal proteolytic cleavage site to generate the secreted form found in urine. This cleavage is catalyzed by HPN. In terms of tissue distribution, detected in kidney and pancreas.

The protein resides in the apical cell membrane. The protein localises to the basolateral cell membrane. It localises to the cell projection. Its subcellular location is the cilium membrane. It is found in the secreted. Its function is as follows. Functions in biogenesis and organization of the apical membrane of epithelial cells of the thick ascending limb of Henle's loop (TALH), where it promotes formation of complex filamentous gel-like structure that may play a role in the water barrier permeability. May serve as a receptor for binding and endocytosis of cytokines (IL-1, IL-2) and TNF. Facilitates neutrophil migration across renal epithelia. In the urine, may contribute to colloid osmotic pressure, retards passage of positively charged electrolytes, and inhibits formation of liquid containing supersaturated salts and subsequent formation of salt crystals. Protects against urinary tract infections by binding to type 1 fimbriated E.coli. Binds to bacterial adhesin fimH which mediates the stable formation of bacterial aggregates, prevents the binding of E.coli to uroplakins UPK1A and UPK1B which act as urothelial receptors for type I fimbriae, and allows for pathogen clearance through micturation. Also promotes aggregation of other bacteria including K.pneumoniae, P.aeruginosa and S.mitis and so may also protect against other uropathogens. This Canis lupus familiaris (Dog) protein is Uromodulin (UMOD).